Here is a 313-residue protein sequence, read N- to C-terminus: Glyoxylate/hydroxypyruvate reductase A (313 aa).

The active site involves arginine 228. Catalysis depends on histidine 276, which acts as the Proton donor.

Belongs to the D-isomer specific 2-hydroxyacid dehydrogenase family. GhrA subfamily.

The protein localises to the cytoplasm. It catalyses the reaction glycolate + NADP(+) = glyoxylate + NADPH + H(+). The enzyme catalyses (R)-glycerate + NAD(+) = 3-hydroxypyruvate + NADH + H(+). The catalysed reaction is (R)-glycerate + NADP(+) = 3-hydroxypyruvate + NADPH + H(+). Functionally, catalyzes the NADPH-dependent reduction of glyoxylate and hydroxypyruvate into glycolate and glycerate, respectively. The chain is Glyoxylate/hydroxypyruvate reductase A from Yersinia enterocolitica serotype O:8 / biotype 1B (strain NCTC 13174 / 8081).